The sequence spans 716 residues: Leucine-rich repeat neuronal protein 1 (716 aa).

A signal peptide spans 1–25 (MARMSFVLAAYQMVLSLLMTSLTGS). An LRRNT domain is found at 26-72 (SLQSSECPQLCVCEIRPWFTPQSTYREATTVDCNDLRLTRIPSNLSS). The Extracellular segment spans residues 26–631 (SLQSSECPQL…DISDQETSTA (606 aa)). Residue Asn-69 is glycosylated (N-linked (GlcNAc...) asparagine). LRR repeat units lie at residues 73–95 (DTQV…QQLF), 96–117 (NLTE…GLAN), 120–141 (QLTT…CLQD), 144–165 (NLQE…AFSG), 168–189 (NLLR…WFDS), 192–213 (NLEI…NFKP), 216–237 (NLRS…ALVG), 240–261 (SLES…ALQK), and 264–285 (NLKF…DFKN). 3 N-linked (GlcNAc...) asparagine glycosylation sites follow: Asn-96, Asn-106, and Asn-117. The 54-residue stretch at 371 to 424 (NPLRCDCVIHWINSNKTNIRFMEPLSMFCAMPPEYRGQQVKEVLIQDSSEQCLP) folds into the LRRCT domain. Asn-385 carries an N-linked (GlcNAc...) asparagine glycan. An Ig-like C2-type domain is found at 424 to 515 (PMISHDTFPN…GADTRVVMIK (92 aa)). Cys-447 and Cys-499 are disulfide-bonded. N-linked (GlcNAc...) asparagine glycosylation is found at Asn-517, Asn-582, and Asn-611. Positions 525-617 (QVLKIYVKQT…SCVNVTTKNA (93 aa)) constitute a Fibronectin type-III domain. Residues 632-652 (LAAVMGSMFAVISLASIAVYI) traverse the membrane as a helical segment. Residues 653-716 (AKRFKRKNYH…VDTSRSYYMW (64 aa)) lie on the Cytoplasmic side of the membrane. The span at 691-700 (DSEKDKDGTA) shows a compositional bias: basic and acidic residues. The segment at 691 to 716 (DSEKDKDGTADTKPTQVDTSRSYYMW) is disordered. Over residues 702-716 (TKPTQVDTSRSYYMW) the composition is skewed to polar residues.

The protein resides in the membrane. The chain is Leucine-rich repeat neuronal protein 1 (LRRN1) from Bos taurus (Bovine).